Consider the following 147-residue polypeptide: Receptor activity-modifying protein 3 (147 aa).

A signal peptide spans 1 to 22 (MATPAQRLHLLPLLLLLCGECA). Residues 23–112 (QVCGCNETGM…CTVDRTHWED (90 aa)) lie on the Extracellular side of the membrane. N-linked (GlcNAc...) asparagine glycosylation is found at Asn-28, Asn-57, Asn-70, and Asn-102. Disulfide bonds link Cys-39–Cys-71 and Cys-56–Cys-103. The helical transmembrane segment at 113–137 (PPDEVLIPLIAVPVLLTVAMAGLVV) threads the bilayer. Over 138 to 147 (WRSKRTDRLL) the chain is Cytoplasmic.

It belongs to the RAMP family. As to quaternary structure, heterodimer of CALCRL and RAMP3; interaction induces allosteric modulation of CALCRL function and ligand specificity for adrenomedullin/ADM and intermedin/ADM2. Heterodimer of CALCR and RAMP3; interaction form the receptor complex AMYR3 for amylin/IAPP. Interacts with GPER1.

Its subcellular location is the cell membrane. The protein localises to the membrane. Its function is as follows. Accessory protein that interacts with and modulates the function of G-protein coupled receptors including calcitonin gene-related peptide type 1 receptor (CALCRL), calcitonin receptor (CALCR) and G-protein coupled estrogen receptor 1 (GPER1). Required for the transport of CALCRL and GPER1 receptors to the plasma membrane. Plays a role in cardioprotection by reducing cardiac hypertrophy and perivascular fibrosis in a GPER1-dependent manner. Together with CALCRL, form a receptor complex for adrenomedullin/ADM and intermedin/ADM2. Together with CALCR, act as a receptor complex for amylin/IAPP. This Rattus norvegicus (Rat) protein is Receptor activity-modifying protein 3.